The following is a 38-amino-acid chain: Photosystem II reaction center protein L (38 aa).

Residues 17 to 37 (SLYWGLLLMFVLAVLFSSYFF) traverse the membrane as a helical segment.

The protein belongs to the PsbL family. PSII is composed of 1 copy each of membrane proteins PsbA, PsbB, PsbC, PsbD, PsbE, PsbF, PsbH, PsbI, PsbJ, PsbK, PsbL, PsbM, PsbT, PsbX, PsbY, PsbZ, Psb30/Ycf12, at least 3 peripheral proteins of the oxygen-evolving complex and a large number of cofactors. It forms dimeric complexes.

It localises to the plastid. It is found in the chloroplast thylakoid membrane. Functionally, one of the components of the core complex of photosystem II (PSII). PSII is a light-driven water:plastoquinone oxidoreductase that uses light energy to abstract electrons from H(2)O, generating O(2) and a proton gradient subsequently used for ATP formation. It consists of a core antenna complex that captures photons, and an electron transfer chain that converts photonic excitation into a charge separation. This subunit is found at the monomer-monomer interface and is required for correct PSII assembly and/or dimerization. This chain is Photosystem II reaction center protein L, found in Emiliania huxleyi (Coccolithophore).